The chain runs to 49 residues: Large ribosomal subunit protein bL33B (49 aa).

This sequence belongs to the bacterial ribosomal protein bL33 family.

This Limosilactobacillus fermentum (strain NBRC 3956 / LMG 18251) (Lactobacillus fermentum) protein is Large ribosomal subunit protein bL33B.